Here is a 273-residue protein sequence, read N- to C-terminus: 5-deoxy-glucuronate isomerase (273 aa).

It belongs to the isomerase IolB family.

It catalyses the reaction 5-deoxy-D-glucuronate = 5-dehydro-2-deoxy-D-gluconate. It participates in polyol metabolism; myo-inositol degradation into acetyl-CoA; acetyl-CoA from myo-inositol: step 4/7. Involved in the isomerization of 5-deoxy-glucuronate (5DG) to 5-dehydro-2-deoxy-D-gluconate (DKG or 2-deoxy-5-keto-D-gluconate). This chain is 5-deoxy-glucuronate isomerase, found in Listeria innocua serovar 6a (strain ATCC BAA-680 / CLIP 11262).